We begin with the raw amino-acid sequence, 491 residues long: Cytosol aminopeptidase (491 aa).

Mn(2+) is bound by residues lysine 263 and aspartate 268. Lysine 275 is an active-site residue. Mn(2+) contacts are provided by aspartate 286, aspartate 345, and glutamate 347. Arginine 349 is an active-site residue.

Belongs to the peptidase M17 family. Requires Mn(2+) as cofactor.

Its subcellular location is the cytoplasm. The enzyme catalyses Release of an N-terminal amino acid, Xaa-|-Yaa-, in which Xaa is preferably Leu, but may be other amino acids including Pro although not Arg or Lys, and Yaa may be Pro. Amino acid amides and methyl esters are also readily hydrolyzed, but rates on arylamides are exceedingly low.. It catalyses the reaction Release of an N-terminal amino acid, preferentially leucine, but not glutamic or aspartic acids.. Its function is as follows. Presumably involved in the processing and regular turnover of intracellular proteins. Catalyzes the removal of unsubstituted N-terminal amino acids from various peptides. This is Cytosol aminopeptidase (pepA) from Haemophilus influenzae (strain ATCC 51907 / DSM 11121 / KW20 / Rd).